Reading from the N-terminus, the 243-residue chain is Ubiquinone/menaquinone biosynthesis C-methyltransferase UbiE (243 aa).

S-adenosyl-L-methionine contacts are provided by residues Thr69, Asp90, and 116–117 (DA).

This sequence belongs to the class I-like SAM-binding methyltransferase superfamily. MenG/UbiE family.

The enzyme catalyses a 2-demethylmenaquinol + S-adenosyl-L-methionine = a menaquinol + S-adenosyl-L-homocysteine + H(+). The catalysed reaction is a 2-methoxy-6-(all-trans-polyprenyl)benzene-1,4-diol + S-adenosyl-L-methionine = a 5-methoxy-2-methyl-3-(all-trans-polyprenyl)benzene-1,4-diol + S-adenosyl-L-homocysteine + H(+). The protein operates within quinol/quinone metabolism; menaquinone biosynthesis; menaquinol from 1,4-dihydroxy-2-naphthoate: step 2/2. Its pathway is cofactor biosynthesis; ubiquinone biosynthesis. Functionally, methyltransferase required for the conversion of demethylmenaquinol (DMKH2) to menaquinol (MKH2) and the conversion of 2-polyprenyl-6-methoxy-1,4-benzoquinol (DDMQH2) to 2-polyprenyl-3-methyl-6-methoxy-1,4-benzoquinol (DMQH2). This Burkholderia ambifaria (strain MC40-6) protein is Ubiquinone/menaquinone biosynthesis C-methyltransferase UbiE.